Here is a 329-residue protein sequence, read N- to C-terminus: Malate dehydrogenase (329 aa).

Residue glycine 12–glycine 18 coordinates NAD(+). Residues arginine 95 and arginine 101 each contribute to the substrate site. NAD(+) is bound by residues asparagine 108, glutamine 115, and valine 132–asparagine 134. Positions 134 and 165 each coordinate substrate. Catalysis depends on histidine 190, which acts as the Proton acceptor.

Belongs to the LDH/MDH superfamily. MDH type 2 family.

It carries out the reaction (S)-malate + NAD(+) = oxaloacetate + NADH + H(+). In terms of biological role, catalyzes the reversible oxidation of malate to oxaloacetate. This chain is Malate dehydrogenase, found in Bordetella bronchiseptica (strain ATCC BAA-588 / NCTC 13252 / RB50) (Alcaligenes bronchisepticus).